A 4568-amino-acid chain; its full sequence is Dynein heavy chain, cytoplasmic (4568 aa).

The interval 1–1826 is stem; that stretch reads MDSGNESSII…VVKMANSQFF (1826 aa). Coiled coils occupy residues 587–652, 814–844, 1241–1274, 1324–1340, and 1559–1591; these read QTRL…VLGK, KLAE…NVLK, QEAL…LDLS, RKIR…LKQL, and VNMQ…RERS. AAA stretches follow at residues 1827 to 2049, 2118 to 2394, 2498 to 2747, and 2842 to 3111; these read YGFE…VLVS, QQLS…PTPQ, EIES…WVRG, and GFYE…GHRV. Residues 1865–1872, 2163–2170, 2537–2544, and 2880–2887 contribute to the ATP site; these read GPAGTGKT, GSSGSGKT, GPPGSGKT, and GTAGAGKT. Coiled-coil stretches lie at residues 3132-3229, 3339-3432, and 3707-3739; these read EKRS…AQVE, ARAQ…RDRW, and NSVI…EVDA. The tract at residues 3132–3432 is stalk; that stretch reads EKRSDLEEEK…SSLRSERDRW (301 aa). AAA regions lie at residues 3496 to 3725 and 3954 to 4169; these read LSTV…EVAQ and AHRV…TLDA. Residues 4359–4386 are a coiled coil; sequence QLLKDIRRDLNEISAVCRAEKKQNNETR.

Belongs to the dynein heavy chain family. As to quaternary structure, consists of at least two heavy chains and a number of intermediate and light chains.

The protein resides in the cytoplasm. It is found in the cytoskeleton. Its function is as follows. Cytoplasmic dynein acts as a motor for the intracellular retrograde motility of vesicles and organelles along microtubules. Dynein has ATPase activity; the force-producing power stroke is thought to occur on release of ADP. May play a role in nuclear migration in hypodermal precursor cells. May be involved in the transport of synaptic vesicle components towards the axon of the DA motor neuron. This function may involve the regulation of dynein by pct-1 and/or cdk-5. Involved in the formation of synapses in the dorsal region during synaptic remodeling of DD motor neurons. Required for anterograde trafficking of dense-core vesicles in the DB motor neuron dendrites. Required for the formation of dendritic branches of PVD sensory neurons. May also play a role in GABAergic synaptic vesicle localization in the ventral nerve cord. May play a role in the pairing of homologous chromosomes during meiosis. In Caenorhabditis elegans, this protein is Dynein heavy chain, cytoplasmic.